The following is a 177-amino-acid chain: Inner membrane protein p22 (177 aa).

The Intravirion segment spans residues 1 to 7 (MFNIKMT). The helical transmembrane segment at 8 to 28 (ISVLLIALIVLLIIILVVFLY) threads the bilayer. Residues 29–177 (YKKQQPPKKV…IALPRNHKHA (149 aa)) lie on the Virion surface side of the membrane.

The protein belongs to the asfivirus inner membrane protein p22 family.

It localises to the virion membrane. It is found in the host cell membrane. The polypeptide is Inner membrane protein p22 (African swine fever virus (isolate Warthog/Namibia/Wart80/1980) (ASFV)).